A 115-amino-acid chain; its full sequence is Double-headed protease inhibitor, submandibular gland (115 aa).

2 consecutive Kazal-like domains span residues 6-66 (IGRE…ACDI) and 67-115 (ECTE…HGEC). 6 disulfide bridges follow: Cys12–Cys46, Cys24–Cys43, Cys32–Cys64, Cys68–Cys97, Cys75–Cys94, and Cys83–Cys115.

It is found in the secreted. Functionally, this inhibitor is composed of two homologous actively inhibiting halves: one which inhibits trypsin, the other which inhibits elastase. In Vulpes vulpes (Red fox), this protein is Double-headed protease inhibitor, submandibular gland.